Here is a 352-residue protein sequence, read N- to C-terminus: N-terminal EF-hand calcium-binding protein 1 (352 aa).

Ser4 is subject to Phosphoserine. 2 EF-hand domains span residues 26 to 61 (KGMS…GVLS) and 60 to 95 (LSGE…HLGE). Residues Asp39, Asn41, Asp43, Lys45, and Glu50 each contribute to the Ca(2+) site. A coiled-coil region spans residues 135–163 (LLKETLNQLQSLQNSLECAMETTEEQTRQ). The segment at 155–202 (ETTEEQTRQERQGPSKPEVLSIQWPGKRSSRRVQRHNSFSPNSPQFNV) is disordered. Residues 190-202 (HNSFSPNSPQFNV) show a composition bias toward polar residues. A phosphoserine mark is found at Ser192 and Ser197. Residues 209–275 (EEDNQWMTQI…EEFQLALKHY (67 aa)) are a coiled coil. Residues 252–340 (MLVQRQMSVT…LETPELTSTM (89 aa)) form the ABM domain.

As to quaternary structure, interacts with STX1. May interact with CPNE6. Expressed in brain (at protein level). Expressed in the cerebral cortex only in layer 4, thalamic nuclei (the mediodorsal nucleus), hippocampus (a small band of pyramidal neurons at the boundary between CA1 and CA3), interneurons interspersed throughout the hippocampus proper, interneurons in the hilus, bodies of the neurons but also their dendritic projections (at protein level).

The protein localises to the cytoplasm. This Mus musculus (Mouse) protein is N-terminal EF-hand calcium-binding protein 1 (Necab1).